We begin with the raw amino-acid sequence, 359 residues long: MITVNVDLGDRAYPIHIGAGLIGRTELFAPHIKGSSVTIVTNTTVDPLYGDALRAALAPLGKRVSTVVLPDGEAYKNWETLNLIFDGLLTDHADRKTTLVALGGGVVGDMTGFAAACYMRGVPFIQVPTTLLSQVDSSVGGKTGINHPLGKNMIGAFYQPQAVIADIGALTTLPDRELAAGVAEVIKTGAIADAEFFDWIEANVEALNRREPAALAHAVKRSCEIKASVVAADEREGGLRAILNFGHTFGHAIEAGLGYGEWLHGEAVGCGMVMAGDLSVRLGLLDEASRQRLDAVIAAAHLPTRAPALGDARYMDLMRVDKKAEAGAIKFILLKRFGDTLITQAPDEAVFATLAQTTR.

Residues 71-76, 105-109, 129-130, Lys142, and Lys151 contribute to the NAD(+) site; these read DGEAYK, GVVGD, and TT. Glu184, His247, and His264 together coordinate Zn(2+).

This sequence belongs to the sugar phosphate cyclases superfamily. Dehydroquinate synthase family. Co(2+) is required as a cofactor. The cofactor is Zn(2+). It depends on NAD(+) as a cofactor.

Its subcellular location is the cytoplasm. It carries out the reaction 7-phospho-2-dehydro-3-deoxy-D-arabino-heptonate = 3-dehydroquinate + phosphate. The protein operates within metabolic intermediate biosynthesis; chorismate biosynthesis; chorismate from D-erythrose 4-phosphate and phosphoenolpyruvate: step 2/7. In terms of biological role, catalyzes the conversion of 3-deoxy-D-arabino-heptulosonate 7-phosphate (DAHP) to dehydroquinate (DHQ). This chain is 3-dehydroquinate synthase, found in Burkholderia cenocepacia (strain ATCC BAA-245 / DSM 16553 / LMG 16656 / NCTC 13227 / J2315 / CF5610) (Burkholderia cepacia (strain J2315)).